An 86-amino-acid chain; its full sequence is uncharacterized protein (86 aa).

The N-terminal stretch at 1 to 25 (MNLRKILLSSALSLGMLVSAAPVLA) is a signal peptide.

This is an uncharacterized protein from Bacillus subtilis (strain 168).